The following is a 381-amino-acid chain: E3 ubiquitin-protein ligase RNF13 (381 aa).

The first 34 residues, 1 to 34 (MLLSIGMLMLSATQVYTILTVQLFAFLNLLPVEA), serve as a signal peptide directing secretion. Residues 35–182 (DILAYNFENA…VPEFSLPLEY (148 aa)) are Lumenal-facing. Residues 65–160 (KGFLINSKPE…GESSANSLKD (96 aa)) form the PA domain. N88 is a glycosylation site (N-linked (GlcNAc...) asparagine). A helical transmembrane segment spans residues 183–203 (YLIPFLIIVGICLILIVIFMI). At 204–381 (TKFVQDRHRA…ERDYNIANTV (178 aa)) the chain is on the cytoplasmic side. An RING-type; atypical zinc finger spans residues 240–282 (CAICLDEYEDGDKLRILPCSHAYHCKCVDPWLTKTKKTCPVCK). Positions 285–381 (VVPSQGDSDS…ERDYNIANTV (97 aa)) are disordered. Composition is skewed to acidic residues over residues 292–304 (SDSD…EENE) and 339–357 (SDYE…AENE).

In terms of assembly, interacts with ERN1. Post-translationally, autoubiquitinated. In terms of tissue distribution, widely expressed (at protein level). In normal pancreas, expressed in islets, but not in ducts, nor in acini (at protein level).

It is found in the endoplasmic reticulum membrane. Its subcellular location is the late endosome membrane. The protein resides in the lysosome membrane. The protein localises to the nucleus inner membrane. The catalysed reaction is S-ubiquitinyl-[E2 ubiquitin-conjugating enzyme]-L-cysteine + [acceptor protein]-L-lysine = [E2 ubiquitin-conjugating enzyme]-L-cysteine + N(6)-ubiquitinyl-[acceptor protein]-L-lysine.. Its pathway is protein modification; protein ubiquitination. Functionally, E3 ubiquitin-protein ligase that regulates cell proliferation. Involved in apoptosis regulation. Mediates ER stress-induced activation of JNK signaling pathway and apoptosis by promoting ERN1 activation and splicing of XBP1 mRNA. Also involved in protein trafficking and localization. The protein is E3 ubiquitin-protein ligase RNF13 of Homo sapiens (Human).